The primary structure comprises 500 residues: Cytochrome P450 11B2, mitochondrial (500 aa).

The N-terminal 24 residues, 1 to 24 (MALRVTADVWLARPWQCLHRTRAL), are a transit peptide targeting the mitochondrion. Phe-381 provides a ligand contact to 21-hydroxyprogesterone. Cys-447 contributes to the heme binding site.

The protein belongs to the cytochrome P450 family. Heme is required as a cofactor.

It is found in the mitochondrion inner membrane. The catalysed reaction is a steroid + 2 reduced [adrenodoxin] + O2 + 2 H(+) = an 11beta-hydroxysteroid + 2 oxidized [adrenodoxin] + H2O. It catalyses the reaction 21-hydroxyprogesterone + 2 reduced [adrenodoxin] + O2 + 2 H(+) = corticosterone + 2 oxidized [adrenodoxin] + H2O. The enzyme catalyses corticosterone + 2 reduced [adrenodoxin] + O2 + 2 H(+) = 18-hydroxycorticosterone + 2 oxidized [adrenodoxin] + H2O. It carries out the reaction 18-hydroxycorticosterone + 2 reduced [adrenodoxin] + O2 + 2 H(+) = aldosterone + 2 oxidized [adrenodoxin] + 2 H2O. The catalysed reaction is 11-deoxycortisol + 2 reduced [adrenodoxin] + O2 + 2 H(+) = cortisol + 2 oxidized [adrenodoxin] + H2O. It catalyses the reaction 21-hydroxyprogesterone + 2 reduced [adrenodoxin] + O2 + 2 H(+) = 18-hydroxy-11-deoxycorticosterone + 2 oxidized [adrenodoxin] + H2O. The enzyme catalyses cortisol + 2 reduced [adrenodoxin] + O2 + 2 H(+) = 18-hydroxycortisol + 2 oxidized [adrenodoxin] + H2O. It carries out the reaction 18-hydroxycortisol + 2 reduced [adrenodoxin] + O2 + 2 H(+) = 18-oxocortisol + 2 oxidized [adrenodoxin] + 2 H2O. It participates in steroid biosynthesis. In terms of biological role, a cytochrome P450 monooxygenase that catalyzes the biosynthesis of aldosterone, the main mineralocorticoid in the human body responsible for salt and water homeostasis, thus involved in blood pressure regulation, arterial hypertension, and the development of heart failure. Catalyzes three sequential oxidative reactions of 11-deoxycorticosterone (21-hydroxyprogesterone), namely 11-beta hydroxylation, followed by two successive oxidations at C18 yielding 18-hydroxy and then 18-oxo intermediates (that would not leave the enzyme active site during the consecutive hydroxylation reactions), ending with the formation of aldosterone. Can also produce 18-hydroxycortisol and 18-oxocortisol, derived from successive oxidations of cortisol at C18, normally found at very low levels, but significantly increased in primary aldosteronism, the most common form of secondary hypertension. Mechanistically, uses molecular oxygen inserting one oxygen atom into a substrate and reducing the second into a water molecule. Two electrons are provided by NADPH via a two-protein mitochondrial transfer system comprising flavoprotein FDXR (adrenodoxin/ferredoxin reductase) and nonheme iron-sulfur protein FDX1 or FDX2 (adrenodoxin/ferredoxin). Could also be involved in the androgen metabolic pathway. This Mus musculus (Mouse) protein is Cytochrome P450 11B2, mitochondrial (Cyp11b2).